A 161-amino-acid chain; its full sequence is Ribonuclease H (161 aa).

Residues 5-149 enclose the RNase H type-1 domain; it reads EKLAIAAATD…VDAIAVAFSK (145 aa). Mg(2+)-binding residues include D14, E53, D78, and D141.

This sequence belongs to the RNase H family. Monomer. The cofactor is Mg(2+).

The protein resides in the cytoplasm. The catalysed reaction is Endonucleolytic cleavage to 5'-phosphomonoester.. Functionally, endonuclease that specifically degrades the RNA of RNA-DNA hybrids. The chain is Ribonuclease H from Prochlorococcus marinus (strain NATL2A).